Reading from the N-terminus, the 613-residue chain is UvrABC system protein C (613 aa).

The GIY-YIG domain occupies 12–89; the sequence is DHPGVYIMHD…IKQHRPRYNV (78 aa). One can recognise a UVR domain in the interval 199 to 234; it reads TALVKELKEQMEAAAARLEFEKAARLRDQLRAVQEV.

Belongs to the UvrC family. As to quaternary structure, interacts with UvrB in an incision complex.

Its subcellular location is the cytoplasm. Functionally, the UvrABC repair system catalyzes the recognition and processing of DNA lesions. UvrC both incises the 5' and 3' sides of the lesion. The N-terminal half is responsible for the 3' incision and the C-terminal half is responsible for the 5' incision. This Moorella thermoacetica (strain ATCC 39073 / JCM 9320) protein is UvrABC system protein C.